Reading from the N-terminus, the 98-residue chain is Cystatin-B (98 aa).

At Met-1 the chain carries N-acetylmethionine. A Secondary area of contact motif is present at residues 46–50 (QVVAG).

This sequence belongs to the cystatin family. In terms of assembly, able to form dimers stabilized by noncovalent forces.

The protein localises to the cytoplasm. It is found in the nucleus. Functionally, this is an intracellular thiol proteinase inhibitor. Tightly binding reversible inhibitor of cathepsins L, H and B. The protein is Cystatin-B (CSTB) of Pongo pygmaeus (Bornean orangutan).